Here is a 752-residue protein sequence, read N- to C-terminus: Photosystem I P700 chlorophyll a apoprotein A1 (752 aa).

8 helical membrane passes run 73–96 (IFSA…FHGA), 159–182 (LYVT…FHYH), 198–222 (LNHH…HVSL), 294–312 (IAHH…GHMY), 349–372 (WHAN…HHMY), 388–414 (LSLF…IFMI), 436–458 (ALIS…LYIH), and 533–551 (FMVH…LILL). The [4Fe-4S] cluster site is built by Cys575 and Cys584. The next 2 helical transmembrane spans lie at 591 to 612 (HVFL…HFSW) and 666 to 688 (ISAY…MFLF). Position 677 (His677) interacts with chlorophyll a'. Chlorophyll a-binding residues include Met685 and Tyr693. Trp694 lines the phylloquinone pocket. The chain crosses the membrane as a helical span at residues 726-746 (AVGAAHYLLGGIATTWAFFLS).

The protein belongs to the PsaA/PsaB family. The PsaA/B heterodimer binds the P700 chlorophyll special pair and subsequent electron acceptors. PSI consists of a core antenna complex that captures photons, and an electron transfer chain that converts photonic excitation into a charge separation. The eukaryotic PSI reaction center is composed of at least 11 subunits. P700 is a chlorophyll a/chlorophyll a' dimer, A0 is one or more chlorophyll a, A1 is one or both phylloquinones and FX is a shared 4Fe-4S iron-sulfur center. serves as cofactor.

The protein resides in the plastid. It is found in the chloroplast thylakoid membrane. It carries out the reaction reduced [plastocyanin] + hnu + oxidized [2Fe-2S]-[ferredoxin] = oxidized [plastocyanin] + reduced [2Fe-2S]-[ferredoxin]. Its function is as follows. PsaA and PsaB bind P700, the primary electron donor of photosystem I (PSI), as well as the electron acceptors A0, A1 and FX. PSI is a plastocyanin/cytochrome c6-ferredoxin oxidoreductase, converting photonic excitation into a charge separation, which transfers an electron from the donor P700 chlorophyll pair to the spectroscopically characterized acceptors A0, A1, FX, FA and FB in turn. Oxidized P700 is reduced on the lumenal side of the thylakoid membrane by plastocyanin or cytochrome c6. This is Photosystem I P700 chlorophyll a apoprotein A1 from Cyanidium caldarium (Red alga).